Consider the following 428-residue polypeptide: Glutamyl-tRNA reductase (428 aa).

Residues 49-52 (TCNR), S107, 112-114 (EPQ), and Q118 each bind substrate. C50 serves as the catalytic Nucleophile. Position 187–192 (187–192 (GAGETI)) interacts with NADP(+).

Belongs to the glutamyl-tRNA reductase family. In terms of assembly, homodimer.

It catalyses the reaction (S)-4-amino-5-oxopentanoate + tRNA(Glu) + NADP(+) = L-glutamyl-tRNA(Glu) + NADPH + H(+). It functions in the pathway porphyrin-containing compound metabolism; protoporphyrin-IX biosynthesis; 5-aminolevulinate from L-glutamyl-tRNA(Glu): step 1/2. Catalyzes the NADPH-dependent reduction of glutamyl-tRNA(Glu) to glutamate 1-semialdehyde (GSA). The polypeptide is Glutamyl-tRNA reductase (Pseudomonas fluorescens (strain Pf0-1)).